A 452-amino-acid polypeptide reads, in one-letter code: Cobyrinate a,c-diamide synthase (452 aa).

A GATase cobBQ-type domain is found at 246–439 (TLAYALDDAF…LHVHFYQDEQ (194 aa)). Cys-328 (nucleophile) is an active-site residue.

It belongs to the CobB/CbiA family. Requires Mg(2+) as cofactor.

It carries out the reaction cob(II)yrinate + 2 L-glutamine + 2 ATP + 2 H2O = cob(II)yrinate a,c diamide + 2 L-glutamate + 2 ADP + 2 phosphate + 2 H(+). It participates in cofactor biosynthesis; adenosylcobalamin biosynthesis; cob(II)yrinate a,c-diamide from sirohydrochlorin (anaerobic route): step 10/10. In terms of biological role, catalyzes the ATP-dependent amidation of the two carboxylate groups at positions a and c of cobyrinate, using either L-glutamine or ammonia as the nitrogen source. The protein is Cobyrinate a,c-diamide synthase of Streptococcus sanguinis (strain SK36).